The following is a 187-amino-acid chain: Orotate phosphoribosyltransferase (187 aa).

Residues Arg99, Lys100, Lys103, His105, and Asp125–Ser133 contribute to the 5-phospho-alpha-D-ribose 1-diphosphate site. Orotate is bound by residues Thr129 and Arg157.

This sequence belongs to the purine/pyrimidine phosphoribosyltransferase family. PyrE subfamily. As to quaternary structure, homodimer. It depends on Mg(2+) as a cofactor.

The enzyme catalyses orotidine 5'-phosphate + diphosphate = orotate + 5-phospho-alpha-D-ribose 1-diphosphate. It functions in the pathway pyrimidine metabolism; UMP biosynthesis via de novo pathway; UMP from orotate: step 1/2. Catalyzes the transfer of a ribosyl phosphate group from 5-phosphoribose 1-diphosphate to orotate, leading to the formation of orotidine monophosphate (OMP). In Leptospira borgpetersenii serovar Hardjo-bovis (strain L550), this protein is Orotate phosphoribosyltransferase.